A 68-amino-acid polypeptide reads, in one-letter code: Amphipathic peptide CT1 (68 aa).

The first 23 residues, 1–23 (MKTQIVILIVAVLFLQLVSQSDA), serve as a signal peptide directing secretion. Leu36 bears the Leucine amide mark. Positions 40–68 (GLKNLDQYNDLFDGEISDADIKFLKDLMR) are excised as a propeptide.

The protein belongs to the non-disulfide-bridged peptide (NDBP) superfamily. Short antimicrobial peptide (group 4) family. In terms of tissue distribution, expressed by the venom gland.

Its subcellular location is the secreted. It localises to the target cell membrane. Its function is as follows. Amphipathic peptide that shows no antibacterial activity even at 50 uM but shows a low hemolytic activity against human erythrocytes. This is Amphipathic peptide CT1 from Mesomexovis subcristatus (Scorpion).